The following is a 226-amino-acid chain: Cytidylate kinase (226 aa).

Residue 10–18 (GPASSGKST) coordinates ATP.

It belongs to the cytidylate kinase family. Type 1 subfamily.

It localises to the cytoplasm. It carries out the reaction CMP + ATP = CDP + ADP. It catalyses the reaction dCMP + ATP = dCDP + ADP. This is Cytidylate kinase from Streptococcus equi subsp. zooepidemicus (strain MGCS10565).